The primary structure comprises 607 residues: UvrABC system protein C (607 aa).

Positions 15–93 constitute a GIY-YIG domain; that stretch reads SEPGVYCMLD…IKKYQPRYNI (79 aa). The UVR domain occupies 202–237; the sequence is HEVIADLIKKMEAASQQLNFELAAKVRDQIMLLRKM.

It belongs to the UvrC family. As to quaternary structure, interacts with UvrB in an incision complex.

It localises to the cytoplasm. Its function is as follows. The UvrABC repair system catalyzes the recognition and processing of DNA lesions. UvrC both incises the 5' and 3' sides of the lesion. The N-terminal half is responsible for the 3' incision and the C-terminal half is responsible for the 5' incision. The protein is UvrABC system protein C of Pseudoalteromonas translucida (strain TAC 125).